The sequence spans 324 residues: UDP-N-acetylenolpyruvoylglucosamine reductase (324 aa).

The FAD-binding PCMH-type domain maps to 36-211 (FRAGGLAELM…AEDKAKIRND (176 aa)). Arg183 is a catalytic residue. Ser232 serves as the catalytic Proton donor. Glu302 is a catalytic residue.

This sequence belongs to the MurB family. FAD is required as a cofactor.

The protein localises to the cytoplasm. It carries out the reaction UDP-N-acetyl-alpha-D-muramate + NADP(+) = UDP-N-acetyl-3-O-(1-carboxyvinyl)-alpha-D-glucosamine + NADPH + H(+). Its pathway is cell wall biogenesis; peptidoglycan biosynthesis. Functionally, cell wall formation. The polypeptide is UDP-N-acetylenolpyruvoylglucosamine reductase (Sinorhizobium medicae (strain WSM419) (Ensifer medicae)).